We begin with the raw amino-acid sequence, 358 residues long: G-protein coupled receptor 87 (358 aa).

Residues 1-47 (MGLNLTLTKLPGNELYSQASHTANSTSEGHGKNSTLHNKFDTIILPV) lie on the Extracellular side of the membrane. Residues N4, N24, and N33 are each glycosylated (N-linked (GlcNAc...) asparagine). Residues 48 to 68 (LYLVIFVASILLNGLAVWIFF) traverse the membrane as a helical segment. Over 69 to 75 (HIRNKTS) the chain is Cytoplasmic. Residues 76–96 (FIFYLKNIVVADLIMTLTFPF) traverse the membrane as a helical segment. The Extracellular segment spans residues 97–116 (RIVRDAGFGPWYFEFILCRY). C114 and C192 are oxidised to a cystine. A helical transmembrane segment spans residues 117–137 (TSVLFYANMYTSIVFLGLISV). Residues 138–159 (DRYLKVVKPFGDSRMYSITFTK) lie on the Cytoplasmic side of the membrane. A helical transmembrane segment spans residues 160-180 (VLSVCVWVIMAILSLPNIILT). Over 181-208 (NGQPTKENIHDCMKLKSPLGAKWHMAVT) the chain is Extracellular. Residues 209 to 229 (YVDSCLFVAVLVILIGCYIAI) traverse the membrane as a helical segment. Residues 230 to 256 (SRYIHKSSRQFISQSSRKRKHNQSIRV) are Cytoplasmic-facing. Residues 257–277 (VVAVFFTCFLPYHLCRIPFTF) form a helical membrane-spanning segment. Topologically, residues 278-297 (SNLDRLLDESAHKILYYCKE) are extracellular. A helical membrane pass occupies residues 298 to 318 (MTLFLSACNVCLDPIIYFFMC). The Cytoplasmic segment spans residues 319 to 358 (KSFSRRLFKKSNIRTRSESIRSLQSVRRSEVRIYYDYTDV).

Belongs to the G-protein coupled receptor 1 family. As to expression, expressed at high levels in testis and brain and to a lesser extent placenta, ovary, prostate, and skeletal muscle but not in heart, lung, kidney, liver or intestine.

The protein localises to the cell membrane. Receptor for lysophosphatidic acid (LPA). Necessary for p53/TP53-dependent survival in response to DNA damage. Promotes the Hippo-YAP signaling pathway and thereby modulates glycolysis and oxidative stress production by the regulation of hexokinase-2/HK2. The polypeptide is G-protein coupled receptor 87 (Gpr87) (Mus musculus (Mouse)).